The chain runs to 36 residues: Potassium channel toxin alpha-KTx 11.3 (36 aa).

3 disulfides stabilise this stretch: cysteine 8-cysteine 27, cysteine 13-cysteine 33, and cysteine 17-cysteine 35.

This sequence belongs to the short scorpion toxin superfamily. Potassium channel inhibitor family. Alpha-KTx 11 subfamily. Expressed by the venom gland.

It localises to the secreted. Functionally, binds and inhibits voltage-sensitive potassium channels. Inhibits the vertebrate potassium channel Kv1.1/KCNA1 with low affinity. This Parabuthus granulatus (Granulated thick-tailed scorpion) protein is Potassium channel toxin alpha-KTx 11.3.